Reading from the N-terminus, the 438-residue chain is Cyanidin-3-O-glucoside 2-O-glucuronosyltransferase (438 aa).

Residues S264, 315–316 (WV), 333–341 (HCGWSSTME), and 355–358 (QFDQ) contribute to the UDP-alpha-D-glucuronate site.

Belongs to the UDP-glycosyltransferase family. In terms of assembly, monomer. As to expression, expressed in petals. Not detected in sepals, stems, leaves, tubular corollas and white petals.

It is found in the cytoplasm. The catalysed reaction is cyanidin 3-O-beta-D-glucoside + UDP-alpha-D-glucuronate = cyanidin 3-O-(2-O-beta-D-glucuronosyl)-beta-D-glucoside + UDP + H(+). Its activity is regulated as follows. Inhibited by copper, mercury, UDP, UTP and partially by calcium, cadmium, iron and UMP. Not affected by cobalt, magnesium, manganese, zinc, nickel, tin, uridine, sadium malonate and glucose. Involved in the production of glucuronosylated anthocyanins that are the origin of the red coloration of flowers. Can use cyanidin 3-O-6''-O-malonylglucoside, cyanidin 3-O-glucoside and delphinidin 3-O-glucosideas substrates, but not pelargonidin 3-O-glucoside, cyanidin 3-O-3'',6''-O-dimalonylglucoside, pelargonidin 3,5-O-diglucoside, pelargonidin 3-O-6''-O-malonylglucoside-5-O-glucoside, quercetin 3-O-glucoside, quercetin 3-O-6''-O-malonylglucoside, daidzin, genistin,7-O-6''-O-malonylglucosides of daidzein and genistein, cyanidin, quercetin, daidzein, genistein p-Nitrophenyl beta-D-glucopyranoside, beta-estradiol, 17alpha-estradiol, 1-naphthol, 2-naphthol, 4-methylumbelliferone, and p-nitrophenol. Highly specific for UDP-glucuronate (UDP-GlcUA). Arg-25 is decisive with respect to UDP-sugar specificity. The polypeptide is Cyanidin-3-O-glucoside 2-O-glucuronosyltransferase (UGAT) (Bellis perennis (English daisy)).